Reading from the N-terminus, the 591-residue chain is Inactive metallocarboxypeptidase ECM14 (591 aa).

Residues 1 to 21 (MRLFARLEVLAILACAVPIAA) form the signal peptide. The propeptide occupies 22–175 (IPSFLSNSYP…QTIYESYPSS (154 aa)). The region spanning 203-523 (DYQPFSVIVT…NAVMVLGRFL (321 aa)) is the Peptidase M14 domain. His265 and Glu268 together coordinate Zn(2+). Substrate is bound by residues 265–268 (HARE), Arg323, and 340–341 (DR). Cys334 and Cys357 are joined by a disulfide. N-linked (GlcNAc...) asparagine glycans are attached at residues Asn350 and Asn381. His397 contributes to the Zn(2+) binding site. 398-399 (SY) contacts substrate. The span at 533-543 (DWEDESQRPKA) shows a compositional bias: basic and acidic residues. A disordered region spans residues 533 to 591 (DWEDESQRPKADEDDIPSENELGENDDSWIPFDYRNHDDQNEGEGYDNDEWGFRRRRKG). Composition is skewed to acidic residues over residues 544–559 (DEDD…ENDD) and 573–582 (NEGEGYDNDE).

The protein belongs to the peptidase M14 family. Zn(2+) serves as cofactor.

It is found in the vacuole. The protein resides in the secreted. Its function is as follows. Inactive carboxypeptidase that may play a role in cell wall organization and biogenesis. This chain is Inactive metallocarboxypeptidase ECM14 (ECM14), found in Paracoccidioides lutzii (strain ATCC MYA-826 / Pb01) (Paracoccidioides brasiliensis).